The following is a 171-amino-acid chain: Peptide deformylase 1 (171 aa).

Residues Cys-99 and His-141 each contribute to the Fe cation site. Glu-142 is an active-site residue.

This sequence belongs to the polypeptide deformylase family. The cofactor is Fe(2+).

The enzyme catalyses N-terminal N-formyl-L-methionyl-[peptide] + H2O = N-terminal L-methionyl-[peptide] + formate. Its function is as follows. Removes the formyl group from the N-terminal Met of newly synthesized proteins. Requires at least a dipeptide for an efficient rate of reaction. N-terminal L-methionine is a prerequisite for activity but the enzyme has broad specificity at other positions. The chain is Peptide deformylase 1 from Xanthomonas axonopodis pv. citri (strain 306).